A 156-amino-acid chain; its full sequence is Ribosomal RNA large subunit methyltransferase H (156 aa).

S-adenosyl-L-methionine contacts are provided by residues L73, G104, and 123–128; that span reads LSSLTL.

This sequence belongs to the RNA methyltransferase RlmH family. As to quaternary structure, homodimer.

Its subcellular location is the cytoplasm. The enzyme catalyses pseudouridine(1915) in 23S rRNA + S-adenosyl-L-methionine = N(3)-methylpseudouridine(1915) in 23S rRNA + S-adenosyl-L-homocysteine + H(+). In terms of biological role, specifically methylates the pseudouridine at position 1915 (m3Psi1915) in 23S rRNA. The protein is Ribosomal RNA large subunit methyltransferase H of Neisseria gonorrhoeae (strain ATCC 700825 / FA 1090).